The primary structure comprises 192 residues: UPF0312 protein PSPTO_5071 (192 aa).

The N-terminal stretch at 1 to 23 (MLKKSLAALALGTALLSAGQAMA) is a signal peptide.

This sequence belongs to the UPF0312 family. Type 1 subfamily.

It is found in the periplasm. This is UPF0312 protein PSPTO_5071 from Pseudomonas syringae pv. tomato (strain ATCC BAA-871 / DC3000).